We begin with the raw amino-acid sequence, 512 residues long: Glutathione-binding protein GsiB (512 aa).

A signal peptide spans 1-26; sequence MTQFITHKWLAALGLASSIAAFPALA.

It belongs to the bacterial solute-binding protein 5 family. In terms of assembly, the complex is composed of two ATP-binding proteins (GsiA), two transmembrane proteins (GsiC and GsiD) and a solute-binding protein (GsiB).

It localises to the periplasm. Its function is as follows. Part of the ABC transporter complex GsiABCD involved in glutathione import. Binds glutathione. The chain is Glutathione-binding protein GsiB from Salmonella typhimurium (strain LT2 / SGSC1412 / ATCC 700720).